A 261-amino-acid polypeptide reads, in one-letter code: Protein LIKE COV 2 (261 aa).

Residues 1-38 form a disordered region; it reads MAEGKEATTSSLSQGLTPHQDPDDAPKSPPNSPNSSTR. At 1 to 56 the chain is on the cytoplasmic side; that stretch reads MAEGKEATTSSLSQGLTPHQDPDDAPKSPPNSPNSSTRKACYGVLQSWVSKKFMTG. Residues 7-17 show a composition bias toward polar residues; the sequence is ATTSSLSQGLT. The chain crosses the membrane as a helical span at residues 57–77; that stretch reads FVVLFPVAVTFLITWWFIQFV. Residues 78–91 lie on the Extracellular side of the membrane; that stretch reads DGFFSPIYENLGVD. The helical transmembrane segment at 92 to 112 threads the bilayer; that stretch reads IFGLGFITSVLFTFFVGIFAS. Residues 113–261 lie on the Cytoplasmic side of the membrane; it reads SWLGSTVFWL…HSLRVPLNRL (149 aa).

Belongs to the plant COV1 protein family.

It localises to the membrane. This Arabidopsis thaliana (Mouse-ear cress) protein is Protein LIKE COV 2.